The primary structure comprises 84 residues: Small ribosomal subunit protein bS20 (84 aa).

The interval 1–25 is disordered; it reads MANIVSNEKTYRHTQKVRKENHAKM.

It belongs to the bacterial ribosomal protein bS20 family.

Its function is as follows. Binds directly to 16S ribosomal RNA. The sequence is that of Small ribosomal subunit protein bS20 from Ureaplasma parvum serovar 3 (strain ATCC 700970).